The sequence spans 668 residues: CLK4-associating serine/arginine rich protein (668 aa).

S101 is subject to Phosphoserine. Disordered regions lie at residues 173 to 232 (AEVE…GMAD) and 252 to 668 (AKAL…HYRH). The span at 182 to 214 (PEEEESPAEEESNSDEDEVIPDIDVEVDVDELN) shows a compositional bias: acidic residues. The segment covering 265-283 (RRSRRQRREFREKRLRGRK) has biased composition (basic residues). S285 and S294 each carry phosphoserine. Residues 290–313 (ARRDSPTYDPYKRSPSESSSESRS) show a composition bias toward basic and acidic residues. T327 is modified (phosphothreonine). Residues S331 and S335 each carry the phosphoserine modification. Composition is skewed to low complexity over residues 340–353 (AAAAAAAAASGAAP) and 378–395 (SSSSASRTSSSRSSSRSS). Residues 396-435 (SRSRRGYYRSGRHARSRSRSWSRSRSRSRRYSRSRSRGRR) are compositionally biased toward basic residues. Residues 436-446 (HSDGGSRDGHR) show a composition bias toward basic and acidic residues. Basic residues predominate over residues 475–486 (RGARGPRHHSSS). 2 stretches are compositionally biased toward low complexity: residues 487 to 510 (HSRSSWSLSPSRSRSVTRSGSRSQ) and 518 to 527 (QSHSQSQSHS). S541 bears the Phosphoserine mark. Phosphothreonine is present on T567. A coiled-coil region spans residues 579–641 (ALNRQFKADK…ERQYSRQSRS (63 aa)). Basic and acidic residues-rich tracts occupy residues 584–611 (FKADKKAAQEKMIQQEHERQEREDELRA) and 619–635 (KERERREKEREEWERQY). Low complexity predominate over residues 636-645 (SRQSRSPSPR). Residues 653-668 (SRRRSRSRSRSPHYRH) show a composition bias toward basic residues.

The protein belongs to the splicing factor SR family. In terms of assembly, probably interacts with CLK4. In terms of processing, phosphorylated in vitro by CLK4. As to expression, highly expressed in brain. Expressed at intermediate level in lung and liver. In brain, it is expressed in the hippocampus, cerebellum and olfactory bulb.

It localises to the nucleus. It is found in the nucleoplasm. Probably functions as an alternative splicing regulator. May regulate the mRNA splicing of genes such as CLK1. May act by regulating members of the CLK kinase family. This Mus musculus (Mouse) protein is CLK4-associating serine/arginine rich protein (Clasrp).